Consider the following 429-residue polypeptide: Glutamate-1-semialdehyde 2,1-aminomutase 2 (429 aa).

The residue at position 268 (K268) is an N6-(pyridoxal phosphate)lysine.

It belongs to the class-III pyridoxal-phosphate-dependent aminotransferase family. HemL subfamily. Homodimer. Requires pyridoxal 5'-phosphate as cofactor.

It localises to the cytoplasm. The catalysed reaction is (S)-4-amino-5-oxopentanoate = 5-aminolevulinate. It participates in porphyrin-containing compound metabolism; protoporphyrin-IX biosynthesis; 5-aminolevulinate from L-glutamyl-tRNA(Glu): step 2/2. This chain is Glutamate-1-semialdehyde 2,1-aminomutase 2, found in Staphylococcus aureus (strain bovine RF122 / ET3-1).